The following is a 1070-amino-acid chain: Carbamoyl phosphate synthase large chain (1070 aa).

The tract at residues 1–401 (MPKRDDIKTI…ALLKAVRSLE (401 aa)) is carboxyphosphate synthetic domain. ATP is bound by residues R129, R169, G175, G176, K208, I210, E215, G241, I242, H243, Q284, and E298. Residues 133-327 (RDLMNELGEP…IAKLAAKIAV (195 aa)) form the ATP-grasp 1 domain. Mg(2+)-binding residues include Q284, E298, and N300. The Mn(2+) site is built by Q284, E298, and N300. The oligomerization domain stretch occupies residues 402–546 (IGADHLLLEE…YSTYEEENES (145 aa)). Residues 547–929 (TRSAKESVIV…ALYKGFVASG (383 aa)) are carbamoyl phosphate synthetic domain. One can recognise an ATP-grasp 2 domain in the interval 671–861 (EKALEILQIP…MANVATRVIL (191 aa)). Residues R707, R746, V748, E752, G777, V778, H779, S780, Q820, and E832 each coordinate ATP. Mg(2+) is bound by residues Q820, E832, and N834. Positions 820, 832, and 834 each coordinate Mn(2+). Residues 930-1070 (TTMHDYGTVL…SEVKQPKARV (141 aa)) form the MGS-like domain. The tract at residues 930 to 1070 (TTMHDYGTVL…SEVKQPKARV (141 aa)) is allosteric domain.

The protein belongs to the CarB family. Composed of two chains; the small (or glutamine) chain promotes the hydrolysis of glutamine to ammonia, which is used by the large (or ammonia) chain to synthesize carbamoyl phosphate. Tetramer of heterodimers (alpha,beta)4. It depends on Mg(2+) as a cofactor. Requires Mn(2+) as cofactor.

The enzyme catalyses hydrogencarbonate + L-glutamine + 2 ATP + H2O = carbamoyl phosphate + L-glutamate + 2 ADP + phosphate + 2 H(+). It catalyses the reaction hydrogencarbonate + NH4(+) + 2 ATP = carbamoyl phosphate + 2 ADP + phosphate + 2 H(+). It functions in the pathway amino-acid biosynthesis; L-arginine biosynthesis; carbamoyl phosphate from bicarbonate: step 1/1. The protein operates within pyrimidine metabolism; UMP biosynthesis via de novo pathway; (S)-dihydroorotate from bicarbonate: step 1/3. Its function is as follows. Large subunit of the glutamine-dependent carbamoyl phosphate synthetase (CPSase). CPSase catalyzes the formation of carbamoyl phosphate from the ammonia moiety of glutamine, carbonate, and phosphate donated by ATP, constituting the first step of 2 biosynthetic pathways, one leading to arginine and/or urea and the other to pyrimidine nucleotides. The large subunit (synthetase) binds the substrates ammonia (free or transferred from glutamine from the small subunit), hydrogencarbonate and ATP and carries out an ATP-coupled ligase reaction, activating hydrogencarbonate by forming carboxy phosphate which reacts with ammonia to form carbamoyl phosphate. This Listeria monocytogenes serotype 4b (strain F2365) protein is Carbamoyl phosphate synthase large chain.